Consider the following 412-residue polypeptide: Putative competence-damage inducible protein (412 aa).

This sequence belongs to the CinA family.

This Bacillus thuringiensis (strain Al Hakam) protein is Putative competence-damage inducible protein.